The chain runs to 244 residues: Phosphoribosyl isomerase A (244 aa).

Residue Asp10 is the Proton acceptor of the active site. Asp129 serves as the catalytic Proton donor.

This sequence belongs to the HisA/HisF family.

The protein localises to the cytoplasm. The enzyme catalyses 1-(5-phospho-beta-D-ribosyl)-5-[(5-phospho-beta-D-ribosylamino)methylideneamino]imidazole-4-carboxamide = 5-[(5-phospho-1-deoxy-D-ribulos-1-ylimino)methylamino]-1-(5-phospho-beta-D-ribosyl)imidazole-4-carboxamide. It carries out the reaction N-(5-phospho-beta-D-ribosyl)anthranilate = 1-(2-carboxyphenylamino)-1-deoxy-D-ribulose 5-phosphate. It functions in the pathway amino-acid biosynthesis; L-histidine biosynthesis; L-histidine from 5-phospho-alpha-D-ribose 1-diphosphate: step 4/9. The protein operates within amino-acid biosynthesis; L-tryptophan biosynthesis; L-tryptophan from chorismate: step 3/5. Functionally, involved in both the histidine and tryptophan biosynthetic pathways. The polypeptide is Phosphoribosyl isomerase A (priA) (Mycobacterium leprae (strain TN)).